The primary structure comprises 149 residues: D-aminoacyl-tRNA deacylase (149 aa).

The Gly-cisPro motif, important for rejection of L-amino acids signature appears at 137 to 138 (GP).

The protein belongs to the DTD family. In terms of assembly, homodimer.

The protein resides in the cytoplasm. It carries out the reaction glycyl-tRNA(Ala) + H2O = tRNA(Ala) + glycine + H(+). The catalysed reaction is a D-aminoacyl-tRNA + H2O = a tRNA + a D-alpha-amino acid + H(+). An aminoacyl-tRNA editing enzyme that deacylates mischarged D-aminoacyl-tRNAs. Also deacylates mischarged glycyl-tRNA(Ala), protecting cells against glycine mischarging by AlaRS. Acts via tRNA-based rather than protein-based catalysis; rejects L-amino acids rather than detecting D-amino acids in the active site. By recycling D-aminoacyl-tRNA to D-amino acids and free tRNA molecules, this enzyme counteracts the toxicity associated with the formation of D-aminoacyl-tRNA entities in vivo and helps enforce protein L-homochirality. The protein is D-aminoacyl-tRNA deacylase of Desulfitobacterium hafniense (strain DSM 10664 / DCB-2).